The following is a 637-amino-acid chain: Chaperone protein HtpG (637 aa).

The a; substrate-binding stretch occupies residues 1–345 (MSHQETHGFQ…SNDLPLNVSR (345 aa)). The interval 346 to 562 (EILQDNKVTR…EGEMSSQMIK (217 aa)) is b. Positions 563-637 (LMQAAGQPVP…VNQMLLKSVG (75 aa)) are c.

Belongs to the heat shock protein 90 family. Homodimer.

Its subcellular location is the cytoplasm. Its function is as follows. Molecular chaperone. Has ATPase activity. In Shewanella amazonensis (strain ATCC BAA-1098 / SB2B), this protein is Chaperone protein HtpG.